A 1168-amino-acid polypeptide reads, in one-letter code: Transcription-repair-coupling factor (1168 aa).

One can recognise a Helicase ATP-binding domain in the interval 633–794 (DMQKSRPMDR…MLGVRDLSVI (162 aa)). 646–653 (GDVGYGKT) is a binding site for ATP. Residues 747 to 750 (DEEQ) carry the DEEQ box motif. The Helicase C-terminal domain maps to 808-969 (VLEQNMSFIK…GFKIAMRDLN (162 aa)).

The protein in the N-terminal section; belongs to the UvrB family. This sequence in the C-terminal section; belongs to the helicase family. RecG subfamily.

The protein resides in the cytoplasm. In terms of biological role, couples transcription and DNA repair by recognizing RNA polymerase (RNAP) stalled at DNA lesions. Mediates ATP-dependent release of RNAP and its truncated transcript from the DNA, and recruitment of nucleotide excision repair machinery to the damaged site. The sequence is that of Transcription-repair-coupling factor from Staphylococcus aureus (strain MRSA252).